Reading from the N-terminus, the 462-residue chain is Myb-like transcriptional regulator mfmK (462 aa).

HTH myb-type domains are found at residues methionine 1–serine 54, alanine 56–isoleucine 110, and cysteine 113–glutamate 162. 3 consecutive DNA-binding regions (H-T-H motif) follow at residues tryptophan 32 to tryptophan 52, tryptophan 83 to leucine 106, and tryptophan 134 to arginine 158. A compositionally biased stretch (basic and acidic residues) spans leucine 159–valine 175. 3 disordered regions span residues leucine 159–proline 184, aspartate 216–glycine 262, and serine 374–isoleucine 408. The segment covering aspartate 216–aspartate 235 has biased composition (acidic residues). 2 stretches are compositionally biased toward polar residues: residues serine 374–proline 385 and phenylalanine 396–isoleucine 408.

It is found in the nucleus. In terms of biological role, myb-like transcriptional regulator; part of the gene cluster that mediates the biosynthesis of the phthalide-terpenoid hybrid 11'-O-desmethylfendlerol. The chain is Myb-like transcriptional regulator mfmK from Annulohypoxylon moriforme (Filamentous fungus).